We begin with the raw amino-acid sequence, 232 residues long: Large ribosomal subunit protein uL1 (232 aa).

This sequence belongs to the universal ribosomal protein uL1 family. As to quaternary structure, part of the 50S ribosomal subunit.

Functionally, binds directly to 23S rRNA. The L1 stalk is quite mobile in the ribosome, and is involved in E site tRNA release. Protein L1 is also a translational repressor protein, it controls the translation of the L11 operon by binding to its mRNA. This Bacteroides fragilis (strain ATCC 25285 / DSM 2151 / CCUG 4856 / JCM 11019 / LMG 10263 / NCTC 9343 / Onslow / VPI 2553 / EN-2) protein is Large ribosomal subunit protein uL1.